The sequence spans 1053 residues: Polyphosphate kinase (1053 aa).

Disordered stretches follow at residues 23–155 (LKIN…QLME), 200–245 (VQNP…TKSK), and 302–328 (NNNN…STSP). Positions 32 to 50 (STTTTTSTTTTTTTTTSTS) are enriched in low complexity. Residues 81 to 102 (VDFEDDYDEESSSFDEEDEDSA) are compositionally biased toward acidic residues. Residues 143–155 (TTANPVQNCQLME) show a composition bias toward polar residues. Residues 215-239 (SSGSSSSSSSNNNNSNSNSNGNCNS) show a composition bias toward low complexity. His800 acts as the Phosphohistidine intermediate in catalysis. The disordered stretch occupies residues 1027–1053 (RSSPIDEDSQTQFMNQTNQKHPVIWSK). Positions 1036-1046 (QTQFMNQTNQK) are enriched in polar residues.

It belongs to the polyphosphate kinase 1 (PPK1) family. Hexamer. May form higher oligomeric structures in the presence of ATP.

It localises to the vesicle. It catalyses the reaction [phosphate](n) + ATP = [phosphate](n+1) + ADP. Catalyzes the reversible transfer of the terminal phosphate of ATP to form a long-chain polyphosphate (polyP). Produces polyP in a broad range of chain lengths (50-300 Pi residues). Involved in development (growth and fruiting body formation), sporulation, phagocytosis, cell division and the late stages of cytokinesis. This Dictyostelium discoideum (Social amoeba) protein is Polyphosphate kinase (ppkA).